Consider the following 141-residue polypeptide: Antifungal protein ginkbilobin-like protein 1 (141 aa).

An N-terminal signal peptide occupies residues 1-32 (MSISSKFQLRSSTSLLLLVALMVVMGMDGAAA). The Gnk2-homologous domain occupies 36–141 (TNFVSSACNT…CFIQYEQHSF (106 aa)). 3 disulfide bridges follow: Cys43/Cys119, Cys95/Cys104, and Cys107/Cys132. Residue Asn44 participates in alpha-D-mannopyranose binding. Arg126 and Glu137 together coordinate alpha-D-mannopyranose.

Exerts antifungal activity through its carbohydrate-binding specificity. This chain is Antifungal protein ginkbilobin-like protein 1, found in Picea glauca (White spruce).